A 701-amino-acid chain; its full sequence is Ribosomal RNA large subunit methyltransferase K/L (701 aa).

One can recognise a THUMP domain in the interval 43 to 154; the sequence is LLYQSLMWSR…KETAHISLDL (112 aa).

Belongs to the methyltransferase superfamily. RlmKL family.

Its subcellular location is the cytoplasm. The catalysed reaction is guanosine(2445) in 23S rRNA + S-adenosyl-L-methionine = N(2)-methylguanosine(2445) in 23S rRNA + S-adenosyl-L-homocysteine + H(+). It carries out the reaction guanosine(2069) in 23S rRNA + S-adenosyl-L-methionine = N(2)-methylguanosine(2069) in 23S rRNA + S-adenosyl-L-homocysteine + H(+). In terms of biological role, specifically methylates the guanine in position 2445 (m2G2445) and the guanine in position 2069 (m7G2069) of 23S rRNA. The chain is Ribosomal RNA large subunit methyltransferase K/L from Klebsiella pneumoniae subsp. pneumoniae (strain ATCC 700721 / MGH 78578).